The following is a 120-amino-acid chain: Large ribosomal subunit protein bL17 (120 aa).

This sequence belongs to the bacterial ribosomal protein bL17 family. Part of the 50S ribosomal subunit. Contacts protein L32.

This chain is Large ribosomal subunit protein bL17, found in Desulforapulum autotrophicum (strain ATCC 43914 / DSM 3382 / VKM B-1955 / HRM2) (Desulfobacterium autotrophicum).